The sequence spans 328 residues: Lipoate--protein ligase 1 (328 aa).

The region spanning 27-214 (PAEESYFLFY…TIFGETEVEE (188 aa)) is the BPL/LPL catalytic domain. Residues R69, 74 to 77 (GAVY), and K131 each bind ATP. Position 131 (K131) interacts with (R)-lipoate.

The catalysed reaction is L-lysyl-[lipoyl-carrier protein] + (R)-lipoate + ATP = N(6)-[(R)-lipoyl]-L-lysyl-[lipoyl-carrier protein] + AMP + diphosphate + H(+). Its pathway is protein modification; protein lipoylation via exogenous pathway; protein N(6)-(lipoyl)lysine from lipoate: step 1/2. It functions in the pathway protein modification; protein lipoylation via exogenous pathway; protein N(6)-(lipoyl)lysine from lipoate: step 2/2. Its function is as follows. Catalyzes the lipoylation of proteins, such as GcvH (SAV0833) and GcvH-L (SAV0324), likely via the ATP-dependent activation of lipoate to lipoyl-AMP and the transfer of the activated lipoyl onto the lipoyl domain of the target protein. The sequence is that of Lipoate--protein ligase 1 from Staphylococcus aureus (strain Mu50 / ATCC 700699).